The following is a 217-amino-acid chain: Phosphoribosylformylglycinamidine synthase subunit PurQ (217 aa).

The Glutamine amidotransferase type-1 domain occupies 2 to 217; it reads SIGVLVFPGS…GRVLLQGLLS (216 aa). The Nucleophile role is filled by C86. Catalysis depends on residues H194 and E196.

In terms of assembly, part of the FGAM synthase complex composed of 1 PurL, 1 PurQ and 2 PurS subunits.

The protein resides in the cytoplasm. The catalysed reaction is N(2)-formyl-N(1)-(5-phospho-beta-D-ribosyl)glycinamide + L-glutamine + ATP + H2O = 2-formamido-N(1)-(5-O-phospho-beta-D-ribosyl)acetamidine + L-glutamate + ADP + phosphate + H(+). It carries out the reaction L-glutamine + H2O = L-glutamate + NH4(+). The protein operates within purine metabolism; IMP biosynthesis via de novo pathway; 5-amino-1-(5-phospho-D-ribosyl)imidazole from N(2)-formyl-N(1)-(5-phospho-D-ribosyl)glycinamide: step 1/2. Its function is as follows. Part of the phosphoribosylformylglycinamidine synthase complex involved in the purines biosynthetic pathway. Catalyzes the ATP-dependent conversion of formylglycinamide ribonucleotide (FGAR) and glutamine to yield formylglycinamidine ribonucleotide (FGAM) and glutamate. The FGAM synthase complex is composed of three subunits. PurQ produces an ammonia molecule by converting glutamine to glutamate. PurL transfers the ammonia molecule to FGAR to form FGAM in an ATP-dependent manner. PurS interacts with PurQ and PurL and is thought to assist in the transfer of the ammonia molecule from PurQ to PurL. The sequence is that of Phosphoribosylformylglycinamidine synthase subunit PurQ from Parasynechococcus marenigrum (strain WH8102).